The following is an 809-amino-acid chain: Ferric-pyoverdine BN7/BN8 receptor (809 aa).

The first 45 residues, 1-45 (MNHTARKRQGWQRSVSQKLAGAVVQGIACMGASAPLLLMPAWATA), serve as a signal peptide directing secretion. The region spanning 166-273 (TPRETPQSLT…PSATINLIRK (108 aa)) is the TBDR plug domain. Positions 278 to 809 (EAQASITGEA…NVMTSFKYSF (532 aa)) constitute a TBDR beta-barrel domain. Positions 792–809 (YGVYGTPRNVMTSFKYSF) match the TonB C-terminal box motif.

This sequence belongs to the TonB-dependent receptor family.

It is found in the cell outer membrane. In terms of biological role, specific receptor for the siderophores ferric pyoverdines (pseudobactins) BN8 and BN7, iron chelating molecules that allow the organism to extract iron from the environment, especially under iron-restricted conditions. The sequence is that of Ferric-pyoverdine BN7/BN8 receptor (pupB) from Pseudomonas putida (Arthrobacter siderocapsulatus).